The chain runs to 412 residues: Gamma-glutamyl phosphate reductase (412 aa).

It belongs to the gamma-glutamyl phosphate reductase family.

It localises to the cytoplasm. The catalysed reaction is L-glutamate 5-semialdehyde + phosphate + NADP(+) = L-glutamyl 5-phosphate + NADPH + H(+). It functions in the pathway amino-acid biosynthesis; L-proline biosynthesis; L-glutamate 5-semialdehyde from L-glutamate: step 2/2. Its function is as follows. Catalyzes the NADPH-dependent reduction of L-glutamate 5-phosphate into L-glutamate 5-semialdehyde and phosphate. The product spontaneously undergoes cyclization to form 1-pyrroline-5-carboxylate. This Aliarcobacter butzleri (strain RM4018) (Arcobacter butzleri) protein is Gamma-glutamyl phosphate reductase.